We begin with the raw amino-acid sequence, 855 residues long: DNA mismatch repair protein MutS (855 aa).

616–623 (GPNMGGKS) is a binding site for ATP.

This sequence belongs to the DNA mismatch repair MutS family.

In terms of biological role, this protein is involved in the repair of mismatches in DNA. It is possible that it carries out the mismatch recognition step. This protein has a weak ATPase activity. This Salmonella dublin (strain CT_02021853) protein is DNA mismatch repair protein MutS.